The following is a 405-amino-acid chain: Tryptophan synthase beta chain (405 aa).

Lys-95 is modified (N6-(pyridoxal phosphate)lysine).

The protein belongs to the TrpB family. In terms of assembly, tetramer of two alpha and two beta chains. It depends on pyridoxal 5'-phosphate as a cofactor.

The catalysed reaction is (1S,2R)-1-C-(indol-3-yl)glycerol 3-phosphate + L-serine = D-glyceraldehyde 3-phosphate + L-tryptophan + H2O. It participates in amino-acid biosynthesis; L-tryptophan biosynthesis; L-tryptophan from chorismate: step 5/5. Functionally, the beta subunit is responsible for the synthesis of L-tryptophan from indole and L-serine. In Pseudomonas putida (strain GB-1), this protein is Tryptophan synthase beta chain.